The sequence spans 353 residues: tRNA-specific 2-thiouridylase MnmA 1 (353 aa).

ATP is bound by residues 9 to 16 (AMSGGVDS) and Met35. Cys98 acts as the Nucleophile in catalysis. Cys98 and Cys194 are oxidised to a cystine. Residue Gly122 coordinates ATP. Positions 144–146 (KDQ) are interaction with tRNA. The active-site Cysteine persulfide intermediate is the Cys194. The segment at 300-301 (RY) is interaction with tRNA.

This sequence belongs to the MnmA/TRMU family.

It localises to the cytoplasm. It carries out the reaction S-sulfanyl-L-cysteinyl-[protein] + uridine(34) in tRNA + AH2 + ATP = 2-thiouridine(34) in tRNA + L-cysteinyl-[protein] + A + AMP + diphosphate + H(+). Functionally, catalyzes the 2-thiolation of uridine at the wobble position (U34) of tRNA, leading to the formation of s(2)U34. This Clostridium botulinum (strain Okra / Type B1) protein is tRNA-specific 2-thiouridylase MnmA 1.